We begin with the raw amino-acid sequence, 419 residues long: Serine hydroxymethyltransferase (419 aa).

(6S)-5,6,7,8-tetrahydrofolate is bound by residues leucine 121 and 125–127 (GHL). An N6-(pyridoxal phosphate)lysine modification is found at lysine 230. 355–357 (SPF) serves as a coordination point for (6S)-5,6,7,8-tetrahydrofolate.

This sequence belongs to the SHMT family. Homodimer. The cofactor is pyridoxal 5'-phosphate.

Its subcellular location is the cytoplasm. It catalyses the reaction (6R)-5,10-methylene-5,6,7,8-tetrahydrofolate + glycine + H2O = (6S)-5,6,7,8-tetrahydrofolate + L-serine. The protein operates within one-carbon metabolism; tetrahydrofolate interconversion. It participates in amino-acid biosynthesis; glycine biosynthesis; glycine from L-serine: step 1/1. Its function is as follows. Catalyzes the reversible interconversion of serine and glycine with tetrahydrofolate (THF) serving as the one-carbon carrier. This reaction serves as the major source of one-carbon groups required for the biosynthesis of purines, thymidylate, methionine, and other important biomolecules. Also exhibits THF-independent aldolase activity toward beta-hydroxyamino acids, producing glycine and aldehydes, via a retro-aldol mechanism. This is Serine hydroxymethyltransferase from Streptococcus equi subsp. equi (strain 4047).